Consider the following 766-residue polypeptide: Signal transducer and activator of transcription 3.2 (766 aa).

The short motif at 150–162 is the Essential for nuclear import element; it reads DVRKKVQDLEQKM. The region spanning 580–670 is the SH2 domain; sequence WNEGYIIGFI…DATNILVSPL (91 aa). Position 725 is a phosphoserine; by NLK (S725).

It belongs to the transcription factor STAT family. Forms a homodimer or a heterodimer with a related family member. Interacts with nlk.2. Phosphorylation of both tyrosine and serine residues, together with dimerization, is required for mesoderm induction.

Its subcellular location is the cytoplasm. The protein localises to the nucleus. In terms of biological role, transcription factor that binds to target promoter sequences and activates transcription upon il6st/gp130 stimulation. Mediates ventralization of embryos, at least in part via inhibition of smad2 signaling. Required for hairy2 to induce dll1/delta1 and promote neural crest cell proliferation and differentiation. Involved in TGFbeta-mediated mesoderm induction in early embryos, acting downstream of map3k7/tak1 and nlk.2. The sequence is that of Signal transducer and activator of transcription 3.2 (stat3.2) from Xenopus laevis (African clawed frog).